The sequence spans 426 residues: Glutamate-1-semialdehyde 2,1-aminomutase (426 aa).

Lys265 carries the post-translational modification N6-(pyridoxal phosphate)lysine.

The protein belongs to the class-III pyridoxal-phosphate-dependent aminotransferase family. HemL subfamily. In terms of assembly, homodimer. The cofactor is pyridoxal 5'-phosphate.

Its subcellular location is the cytoplasm. It carries out the reaction (S)-4-amino-5-oxopentanoate = 5-aminolevulinate. It functions in the pathway porphyrin-containing compound metabolism; protoporphyrin-IX biosynthesis; 5-aminolevulinate from L-glutamyl-tRNA(Glu): step 2/2. This is Glutamate-1-semialdehyde 2,1-aminomutase from Salmonella gallinarum (strain 287/91 / NCTC 13346).